Consider the following 125-residue polypeptide: Protein ApaG (125 aa).

Residues 1–125 enclose the ApaG domain; it reads MIDAPRIIVQ…FRLAIPSLIN (125 aa).

The chain is Protein ApaG from Edwardsiella ictaluri (strain 93-146).